The chain runs to 363 residues: MGFKCGFVGLPNVGKSTLFNYLTKLNIPADNYPFCTIKSNVGIVPVLDNRLNKIAQVVCSNKIIPATIELVDIAGLVKGAYKGEGLGNQFLDHIRDTNVIMHIVRCFENRYVTHIYGSVDPVRDVQIINLELILSDIEVCKNRMCKLEINKLSHNKQVNKELLILKKCVYHLEKSKSLRSLNLTEEEIFVINYLRLITLKPVVYIFNISIDQSRNLYKREIFDIIKNEHNAKTVNVCLDLMQSSKNDVSAYDHLSLKYKQLFNKMLKNVIWAGFNALNLITFFTAGKKEVHAWTTTNNLFIFQSVKCIHTDLSKGFIRAQVISYDDFIKYKGEKRSKELGKIRIEGKRYVICDGDIIHVLYNV.

Residues 3 to 257 (FKCGFVGLPN…VSAYDHLSLK (255 aa)) form the OBG-type G domain. 12 to 17 (NVGKST) contributes to the ATP binding site. Mg(2+)-binding residues include serine 16 and threonine 36. Positions 278–361 (NLITFFTAGK…CDGDIIHVLY (84 aa)) constitute a TGS domain.

Belongs to the TRAFAC class OBG-HflX-like GTPase superfamily. OBG GTPase family. YchF/OLA1 subfamily. The cofactor is Mg(2+).

In terms of biological role, ATPase that binds to both the 70S ribosome and the 50S ribosomal subunit in a nucleotide-independent manner. This chain is Ribosome-binding ATPase YchF, found in Buchnera aphidicola subsp. Baizongia pistaciae (strain Bp).